A 421-amino-acid polypeptide reads, in one-letter code: MSKLTIVRGFNDVLPLDSYKWQFLESKVKLILDRYNYSETRLPIVERSELFHRSVGESSDIVSKETYDFQDRNGDSLTLRPEGTAGCVRMVIENNLATRGQTQKLWYCGPMFRYERPQKGRYRQFYQLGVEAYGFDGIAIDLEVIAIAWSLFKELGISEYVTLELNSLGSSLNRQEYTQALLQYLKPYHAELDEDSIKRLDKNPLRILDSKIEKTQKILANAPKLIDFIDHDLRLRFKQTCQYLDALGVRYKLNENLVRGLDYYTGLVFEWTTDKLGSQSAICAGGRYDGLVDNLGGQKTAAIGFAIGMERLLLLLEDLGKLPNQDNACDVFFILDSAQLHQSLAIVENIRQELPQLKIDMDLKFGSFKSQFKKADKSGAKVAIIIGQDELDNGFAGIKFLQQNEEQQQVAFNELINFLER.

It belongs to the class-II aminoacyl-tRNA synthetase family. In terms of assembly, homodimer.

It is found in the cytoplasm. It catalyses the reaction tRNA(His) + L-histidine + ATP = L-histidyl-tRNA(His) + AMP + diphosphate + H(+). This Francisella tularensis subsp. holarctica (strain LVS) protein is Histidine--tRNA ligase.